The primary structure comprises 206 residues: ATP-dependent Clp protease proteolytic subunit 2 (206 aa).

The active-site Nucleophile is the serine 100. Residue histidine 125 is part of the active site.

Belongs to the peptidase S14 family. In terms of assembly, fourteen ClpP subunits assemble into 2 heptameric rings which stack back to back to give a disk-like structure with a central cavity, resembling the structure of eukaryotic proteasomes.

Its subcellular location is the cytoplasm. It carries out the reaction Hydrolysis of proteins to small peptides in the presence of ATP and magnesium. alpha-casein is the usual test substrate. In the absence of ATP, only oligopeptides shorter than five residues are hydrolyzed (such as succinyl-Leu-Tyr-|-NHMec, and Leu-Tyr-Leu-|-Tyr-Trp, in which cleavage of the -Tyr-|-Leu- and -Tyr-|-Trp bonds also occurs).. In terms of biological role, cleaves peptides in various proteins in a process that requires ATP hydrolysis. Has a chymotrypsin-like activity. Plays a major role in the degradation of misfolded proteins. The protein is ATP-dependent Clp protease proteolytic subunit 2 of Myxococcus xanthus.